Reading from the N-terminus, the 191-residue chain is MYQDLIRNELTEAADVLNKFLSDDHNIAQIEAAAKMIAESFKQDGKVLSCGNGGSHCDAMHFAEELTGRYRENRPGYAGIAISDPSHLSCVSNDFGYDYVFSRYVEAVGRKGDVLFGLSTSGNSGNILKAIEAAKAKGMKTIALTGKDGGKMAGLADVEIRVPHFGYADRIQEVHIKIIHIIIQLIEKEME.

The SIS domain occupies 37 to 191 (IAESFKQDGK…IIQLIEKEME (155 aa)). 52–54 (NGG) serves as a coordination point for substrate. Zn(2+) is bound by residues His61 and Glu65. Substrate is bound by residues Glu65, 93-94 (ND), 119-121 (STS), Ser124, and Gln172. The Zn(2+) site is built by Gln172 and His180.

The protein belongs to the SIS family. GmhA subfamily. As to quaternary structure, homotetramer. It depends on Zn(2+) as a cofactor.

The protein resides in the cytoplasm. The catalysed reaction is 2 D-sedoheptulose 7-phosphate = D-glycero-alpha-D-manno-heptose 7-phosphate + D-glycero-beta-D-manno-heptose 7-phosphate. Its pathway is carbohydrate biosynthesis; D-glycero-D-manno-heptose 7-phosphate biosynthesis; D-glycero-alpha-D-manno-heptose 7-phosphate and D-glycero-beta-D-manno-heptose 7-phosphate from sedoheptulose 7-phosphate: step 1/1. It functions in the pathway bacterial outer membrane biogenesis; LPS core biosynthesis. Functionally, catalyzes the isomerization of sedoheptulose 7-phosphate in D-glycero-D-manno-heptose 7-phosphate. The polypeptide is Phosphoheptose isomerase (Vibrio vulnificus (strain CMCP6)).